Here is a 230-residue protein sequence, read N- to C-terminus: Cytochrome c-552 (230 aa).

The signal sequence occupies residues 1–47 (MTTYLSQDRLRNKENDTMTYQHSKMYQSRTFLLFSALLLVAGQASAA). Residues C63, C66, H67, C166, C169, and H170 each coordinate heme c.

Post-translationally, binds 2 heme c groups covalently per subunit.

The protein resides in the periplasm. Its function is as follows. Diheme, high potential cytochrome c. The chain is Cytochrome c-552 (cyc1) from Acidithiobacillus ferridurans.